The following is a 361-amino-acid chain: Biotin synthase (361 aa).

The Radical SAM core domain occupies 63-290 (NTVQLSTLLS…RAMVRLSAGR (228 aa)). Residues C78, C82, and C85 each coordinate [4Fe-4S] cluster. Residues C122, C153, C213, and R285 each contribute to the [2Fe-2S] cluster site.

Belongs to the radical SAM superfamily. Biotin synthase family. Homodimer. The cofactor is [4Fe-4S] cluster. [2Fe-2S] cluster is required as a cofactor.

The catalysed reaction is (4R,5S)-dethiobiotin + (sulfur carrier)-SH + 2 reduced [2Fe-2S]-[ferredoxin] + 2 S-adenosyl-L-methionine = (sulfur carrier)-H + biotin + 2 5'-deoxyadenosine + 2 L-methionine + 2 oxidized [2Fe-2S]-[ferredoxin]. Its pathway is cofactor biosynthesis; biotin biosynthesis; biotin from 7,8-diaminononanoate: step 2/2. Its function is as follows. Catalyzes the conversion of dethiobiotin (DTB) to biotin by the insertion of a sulfur atom into dethiobiotin via a radical-based mechanism. This Paraburkholderia phytofirmans (strain DSM 17436 / LMG 22146 / PsJN) (Burkholderia phytofirmans) protein is Biotin synthase.